The sequence spans 450 residues: UDP-N-acetylmuramoylalanine--D-glutamate ligase (450 aa).

Residue 111–117 coordinates ATP; that stretch reads GTNGKST.

This sequence belongs to the MurCDEF family.

The protein resides in the cytoplasm. The enzyme catalyses UDP-N-acetyl-alpha-D-muramoyl-L-alanine + D-glutamate + ATP = UDP-N-acetyl-alpha-D-muramoyl-L-alanyl-D-glutamate + ADP + phosphate + H(+). The protein operates within cell wall biogenesis; peptidoglycan biosynthesis. Cell wall formation. Catalyzes the addition of glutamate to the nucleotide precursor UDP-N-acetylmuramoyl-L-alanine (UMA). The protein is UDP-N-acetylmuramoylalanine--D-glutamate ligase of Rickettsia bellii (strain RML369-C).